The sequence spans 255 residues: tRNA (guanine-N(1)-)-methyltransferase (255 aa).

Residues Gly121 and 141–146 (IGDYVL) contribute to the S-adenosyl-L-methionine site. The disordered stretch occupies residues 236–255 (PVKAPNRAGRQKTPKNKTDG). Over residues 244-255 (GRQKTPKNKTDG) the composition is skewed to basic residues.

It belongs to the RNA methyltransferase TrmD family. Homodimer.

It localises to the cytoplasm. It catalyses the reaction guanosine(37) in tRNA + S-adenosyl-L-methionine = N(1)-methylguanosine(37) in tRNA + S-adenosyl-L-homocysteine + H(+). Functionally, specifically methylates guanosine-37 in various tRNAs. The chain is tRNA (guanine-N(1)-)-methyltransferase from Bradyrhizobium diazoefficiens (strain JCM 10833 / BCRC 13528 / IAM 13628 / NBRC 14792 / USDA 110).